The chain runs to 427 residues: Flotillin-1 (427 aa).

Residues S19, S163, and S385 each carry the phosphoserine modification. A Phosphothreonine modification is found at T387.

Belongs to the band 7/mec-2 family. Flotillin subfamily. Heterooligomeric complex of flotillin-1 and flotillin-2 and caveolin-1 and caveolin-2. Interacts with ECPAS.

The protein resides in the cell membrane. It is found in the endosome. The protein localises to the membrane. It localises to the caveola. Its subcellular location is the melanosome. The protein resides in the membrane raft. In terms of biological role, may act as a scaffolding protein within caveolar membranes, functionally participating in formation of caveolae or caveolae-like vesicles. The polypeptide is Flotillin-1 (FLOT1) (Macaca mulatta (Rhesus macaque)).